The primary structure comprises 363 residues: Fructose-bisphosphate aldolase C-B (363 aa).

The substrate site is built by Arg56 and Lys147. The active-site Proton acceptor is Glu188. Lys230 serves as the catalytic Schiff-base intermediate with dihydroxyacetone-P.

It belongs to the class I fructose-bisphosphate aldolase family. In terms of assembly, homotetramer.

The enzyme catalyses beta-D-fructose 1,6-bisphosphate = D-glyceraldehyde 3-phosphate + dihydroxyacetone phosphate. It participates in carbohydrate degradation; glycolysis; D-glyceraldehyde 3-phosphate and glycerone phosphate from D-glucose: step 4/4. The polypeptide is Fructose-bisphosphate aldolase C-B (aldocb) (Danio rerio (Zebrafish)).